A 260-amino-acid chain; its full sequence is Aspartate/glutamate leucyltransferase (260 aa).

The protein belongs to the R-transferase family. Bpt subfamily.

It localises to the cytoplasm. The catalysed reaction is N-terminal L-glutamyl-[protein] + L-leucyl-tRNA(Leu) = N-terminal L-leucyl-L-glutamyl-[protein] + tRNA(Leu) + H(+). It catalyses the reaction N-terminal L-aspartyl-[protein] + L-leucyl-tRNA(Leu) = N-terminal L-leucyl-L-aspartyl-[protein] + tRNA(Leu) + H(+). Its function is as follows. Functions in the N-end rule pathway of protein degradation where it conjugates Leu from its aminoacyl-tRNA to the N-termini of proteins containing an N-terminal aspartate or glutamate. The protein is Aspartate/glutamate leucyltransferase of Sphingomonas elodea.